A 361-amino-acid chain; its full sequence is Mitochondrial fission regulator 2 (361 aa).

Serine 137 carries the phosphoserine modification. Disordered stretches follow at residues phenylalanine 191–methionine 286 and leucine 298–proline 322. Residues valine 219–glutamine 231 show a composition bias toward pro residues. Residues phenylalanine 232 to proline 244 are compositionally biased toward low complexity. The span at histidine 250–aspartate 282 shows a compositional bias: basic and acidic residues. 2 positions are modified to phosphoserine: serine 304 and serine 340.

Belongs to the MTFR1 family. As to expression, expressed predominantly in testis (at protein level). Expressed to a lower extent in spleen.

Its subcellular location is the mitochondrion. May play a role in mitochondrial aerobic respiration essentially in the testis. Can also promote mitochondrial fission. The protein is Mitochondrial fission regulator 2 (Mtfr2) of Mus musculus (Mouse).